Consider the following 390-residue polypeptide: Protein MalY (390 aa).

Lysine 233 is subject to N6-(pyridoxal phosphate)lysine.

Belongs to the class-II pyridoxal-phosphate-dependent aminotransferase family. MalY/PatB cystathionine beta-lyase subfamily. In terms of assembly, homodimer. Interacts with MalT. Pyridoxal 5'-phosphate serves as cofactor.

The enzyme catalyses L,L-cystathionine + H2O = L-homocysteine + pyruvate + NH4(+). The catalysed reaction is an S-substituted L-cysteine + H2O = a thiol + pyruvate + NH4(+). Its function is as follows. Acts as a beta-cystathionase and as a repressor of the maltose regulon. The protein is Protein MalY (malY) of Escherichia coli (strain K12).